We begin with the raw amino-acid sequence, 391 residues long: Putative glutamate--cysteine ligase 2-2 (391 aa).

This sequence belongs to the glutamate--cysteine ligase type 2 family. YbdK subfamily.

The enzyme catalyses L-cysteine + L-glutamate + ATP = gamma-L-glutamyl-L-cysteine + ADP + phosphate + H(+). ATP-dependent carboxylate-amine ligase which exhibits weak glutamate--cysteine ligase activity. In Saccharopolyspora erythraea (strain ATCC 11635 / DSM 40517 / JCM 4748 / NBRC 13426 / NCIMB 8594 / NRRL 2338), this protein is Putative glutamate--cysteine ligase 2-2.